Here is a 920-residue protein sequence, read N- to C-terminus: Probable transport protein MmpL7 (920 aa).

12 helical membrane passes run 44 to 64 (LLVV…LTFT), 210 to 230 (ITAW…VLLL), 241 to 261 (AIVL…AAVV), 271 to 291 (VFSW…ATML), 311 to 331 (LPAF…LLLA), 344 to 364 (LGVF…IALA), 389 to 409 (SASA…IIGM), 761 to 781 (LIHD…LASM), 790 to 810 (AVGV…IALW), 822 to 842 (VPLV…VAGI), 864 to 884 (GAVA…VLVS), and 888 to 908 (FSVL…LITV).

The protein belongs to the resistance-nodulation-cell division (RND) (TC 2.A.6) family. MmpL subfamily.

The protein resides in the cell membrane. The polypeptide is Probable transport protein MmpL7 (mmpL7) (Mycobacterium bovis (strain ATCC BAA-935 / AF2122/97)).